We begin with the raw amino-acid sequence, 115 residues long: UPF0127 protein PH1112 (115 aa).

Belongs to the UPF0127 family.

The sequence is that of UPF0127 protein PH1112 from Pyrococcus horikoshii (strain ATCC 700860 / DSM 12428 / JCM 9974 / NBRC 100139 / OT-3).